Reading from the N-terminus, the 365-residue chain is Alanine racemase (365 aa).

Lys32 serves as the catalytic Proton acceptor; specific for D-alanine. Lys32 carries the post-translational modification N6-(pyridoxal phosphate)lysine. Residue Arg128 coordinates substrate. The active-site Proton acceptor; specific for L-alanine is Tyr257. Met305 contributes to the substrate binding site.

This sequence belongs to the alanine racemase family. Pyridoxal 5'-phosphate is required as a cofactor.

It carries out the reaction L-alanine = D-alanine. It functions in the pathway amino-acid biosynthesis; D-alanine biosynthesis; D-alanine from L-alanine: step 1/1. Functionally, catalyzes the interconversion of L-alanine and D-alanine. May also act on other amino acids. This chain is Alanine racemase (alr), found in Francisella tularensis subsp. tularensis (strain WY96-3418).